The chain runs to 238 residues: Ribosomal RNA small subunit methyltransferase G (238 aa).

Residues Gly106, Leu111, 157-158 (IE), and Arg170 contribute to the S-adenosyl-L-methionine site.

It belongs to the methyltransferase superfamily. RNA methyltransferase RsmG family.

It localises to the cytoplasm. The catalysed reaction is guanosine(527) in 16S rRNA + S-adenosyl-L-methionine = N(7)-methylguanosine(527) in 16S rRNA + S-adenosyl-L-homocysteine. Its function is as follows. Specifically methylates the N7 position of guanine in position 527 of 16S rRNA. The polypeptide is Ribosomal RNA small subunit methyltransferase G (Psychrobacter cryohalolentis (strain ATCC BAA-1226 / DSM 17306 / VKM B-2378 / K5)).